We begin with the raw amino-acid sequence, 182 residues long: Ribosome maturation factor RimM (182 aa).

A PRC barrel domain is found at 102-182 (EEGDYYWKDL…TIEVDWDPGF (81 aa)).

The protein belongs to the RimM family. As to quaternary structure, binds ribosomal protein uS19.

Its subcellular location is the cytoplasm. Its function is as follows. An accessory protein needed during the final step in the assembly of 30S ribosomal subunit, possibly for assembly of the head region. Essential for efficient processing of 16S rRNA. May be needed both before and after RbfA during the maturation of 16S rRNA. It has affinity for free ribosomal 30S subunits but not for 70S ribosomes. This is Ribosome maturation factor RimM from Salmonella gallinarum (strain 287/91 / NCTC 13346).